We begin with the raw amino-acid sequence, 219 residues long: GTP-binding protein drn-1 (219 aa).

Residues 37-44 (GAGGVGKS), 56-62 (NENYVPT), 85-89 (DTTGS), 146-149 (NKKD), and 177-178 (AK) each bind GTP. The Effector region motif lies at 59 to 67 (YVPTIEDTY). Residue Cys-216 is modified to Cysteine methyl ester. Cys-216 carries the S-geranylgeranyl cysteine lipid modification. Residues 217 to 219 (HIM) constitute a propeptide, removed in mature form.

It belongs to the small GTPase superfamily. Di-Ras family. Interacts with epac-1 (via C-terminus). As to expression, expressed specifically in neurons including the nerve ring, ventral and dorsal nerve cord motor neurons and tail ganglia.

It is found in the cell membrane. Its function is as follows. Displays low GTPase activity and exists predominantly in the GTP-bound form. Together with epac-1, may regulate acetylcholine release at the neuromuscular junctions probably downstream of G-protein gsa-1 and adenylate cyclase acy-1. The sequence is that of GTP-binding protein drn-1 from Caenorhabditis elegans.